The chain runs to 59 residues: Large ribosomal subunit protein uL30 (59 aa).

It belongs to the universal ribosomal protein uL30 family. Part of the 50S ribosomal subunit.

This chain is Large ribosomal subunit protein uL30, found in Enterococcus faecalis (strain ATCC 700802 / V583).